The sequence spans 470 residues: Choline/ethanolamine transporter flvcr2a (470 aa).

Topologically, residues 1 to 23 (MCDKADNHIDVQPEGNLEVSSVS) are cytoplasmic. A helical membrane pass occupies residues 24-48 (STRLYRRRWVILLLFSSYSLCNAFQ). The choline site is built by Asn-45, Ala-46, and Trp-49. Over 49-66 (WIQYGIINNIFMKFYQVS) the chain is Extracellular. The chain crosses the membrane as a helical span at residues 67 to 94 (SFAVDWLSMVYMLTYIPFIFPVTWLLER). Residues 95 to 96 (KG) are Cytoplasmic-facing. Residues 97-116 (LRVVALLAASINCAGTWIKV) form a helical membrane-spanning segment. Over 117–123 (ASVQPSL) the chain is Extracellular. Residues 124 to 152 (FWVTMLGQFACSCAQVFILGMPSQVASVW) traverse the membrane as a helical segment. Choline-binding residues include Gln-138 and Leu-142. The Cytoplasmic segment spans residues 153–157 (FGSDE). The chain crosses the membrane as a helical span at residues 158–183 (VSTACAIGVFGNQLGIAIGFLVPPVL). The Extracellular portion of the chain corresponds to 184–188 (VPNVE). A helical membrane pass occupies residues 189 to 218 (DMGELAEHISIMFYITAAVATLIFLLVVFV). The Cytoplasmic segment spans residues 219-254 (FQEKPETPPSLAQVALRNMPTGQHSYLASIARLMCN). A helical membrane pass occupies residues 255–285 (KPFILLLISYGLNVGSFYAVSTLLNRMIIEH). Tyr-272 is a choline binding site. Residues 286–289 (YPGE) lie on the Extracellular side of the membrane. Residues 290–318 (EVNAGRIGLTLVVAGVVGSLICGVWLDKT) traverse the membrane as a helical segment. Over 319–320 (KT) the chain is Cytoplasmic. The chain crosses the membrane as a helical span at residues 321–343 (YKQTTLSVYLLSFVGMLIYSFTL). Residues 344-346 (NLG) lie on the Extracellular side of the membrane. A helical membrane pass occupies residues 347 to 376 (HLWLVFLTSGVLGFFMTGYLPLGFEFAVEL). Residues 377–384 (TYPESEGT) are Cytoplasmic-facing. Residues 385 to 410 (SSGLLNCSAQVFGIAFTIIQGKIIDH) form a helical membrane-spanning segment. Gln-394 contributes to the choline binding site. At 411 to 412 (FG) the chain is on the extracellular side. Residues 413 to 435 (TLAGNIFLCVFLLIGSIMTAFIK) traverse the membrane as a helical segment. The Cytoplasmic segment spans residues 436–470 (SDLRRQKANQETGGNADSSVHPQHGETLPVKEVKM). The segment covering 445–456 (QETGGNADSSVH) has biased composition (polar residues). The interval 445-470 (QETGGNADSSVHPQHGETLPVKEVKM) is disordered.

Belongs to the major facilitator superfamily. Feline leukemia virus subgroup C receptor (TC 2.A.1.28.1) family.

The protein resides in the cell membrane. The protein localises to the mitochondrion membrane. Its subcellular location is the endoplasmic reticulum membrane. It catalyses the reaction choline(out) = choline(in). The catalysed reaction is ethanolamine(in) = ethanolamine(out). It carries out the reaction heme b(in) = heme b(out). Choline uniporter that specifically mediates choline uptake at the blood-brain-barrier. Responsible for the majority of choline uptake across the blood-brain-barrier from the circulation into the brain. Choline, a nutrient critical for brain development, is a precursor of phosphatidylcholine, as well as betaine. Also mediates transport of ethanolamine. Choline and ethanolamine transport is not coupled with proton transport and is exclusively driven by the choline gradient across the plasma membrane. Also acts as a heme b transporter. The sequence is that of Choline/ethanolamine transporter flvcr2a from Danio rerio (Zebrafish).